The following is a 457-amino-acid chain: Protein translocase subunit SecY (457 aa).

The next 10 membrane-spanning stretches (helical) occupy residues I17 to G37, I75 to F95, L120 to M140, V163 to G183, I195 to F215, I230 to I250, V287 to L307, V326 to T346, L386 to L406, and V412 to M432.

The protein belongs to the SecY/SEC61-alpha family. As to quaternary structure, component of the Sec protein translocase complex. Heterotrimer consisting of SecY, SecE and SecG subunits. The heterotrimers can form oligomers, although 1 heterotrimer is thought to be able to translocate proteins. Interacts with the ribosome. Interacts with SecDF, and other proteins may be involved. Interacts with SecA.

Its subcellular location is the cell inner membrane. Functionally, the central subunit of the protein translocation channel SecYEG. Consists of two halves formed by TMs 1-5 and 6-10. These two domains form a lateral gate at the front which open onto the bilayer between TMs 2 and 7, and are clamped together by SecE at the back. The channel is closed by both a pore ring composed of hydrophobic SecY resides and a short helix (helix 2A) on the extracellular side of the membrane which forms a plug. The plug probably moves laterally to allow the channel to open. The ring and the pore may move independently. The sequence is that of Protein translocase subunit SecY from Chlamydia muridarum (strain MoPn / Nigg).